The chain runs to 201 residues: Extracellular superoxide dismutase [Cu-Zn] (201 aa).

The first 42 residues, 1–42 (MINSFIVIFLSFLIFINYANLVCVEATHVYGRRSHSNGMHGN), serve as a signal peptide directing secretion. H89, H91, and H106 together coordinate Cu cation. C100 and C192 are oxidised to a cystine. Positions 106, 114, 123, and 126 each coordinate Zn(2+). H163 lines the Cu cation pocket.

Belongs to the Cu-Zn superoxide dismutase family. In terms of assembly, homodimer. The cofactor is Cu cation. Requires Zn(2+) as cofactor.

The protein resides in the secreted. The protein localises to the extracellular space. The enzyme catalyses 2 superoxide + 2 H(+) = H2O2 + O2. Destroys radicals which are normally produced within the cells and which are toxic to biological systems. May act in the parasite defense against phagocyte-generated reactive oxygen species. The sequence is that of Extracellular superoxide dismutase [Cu-Zn] (sod-4) from Onchocerca volvulus.